We begin with the raw amino-acid sequence, 129 residues long: LEM domain-containing protein 1 (129 aa).

The region spanning 1–45 is the LEM domain; sequence MVDVKCLSDYELHKHLMKLGFTPGPILPSTRKTYEKKLVQLLASP. The interval 45–129 is disordered; it reads PPWKPPVMKR…RAPRTTSHGA (85 aa). Residues 83–97 show a composition bias toward basic and acidic residues; sequence SLKKTTLDATRDPRA.

In Mus musculus (Mouse), this protein is LEM domain-containing protein 1 (Lemd1).